We begin with the raw amino-acid sequence, 414 residues long: Tar DNA-binding protein homolog 1 (414 aa).

Basic and acidic residues-rich tracts occupy residues Met-1–Asp-44 and Asp-153–Glu-167. Disordered regions lie at residues Met-1–Pro-58 and Ser-132–Glu-167. RRM domains lie at Val-173 to Pro-259 and Ser-262 to Pro-341. The segment at Glu-343 to Trp-414 is disordered. The span at Asn-361 to Ile-373 shows a compositional bias: basic and acidic residues.

In terms of assembly, interacts with chromobox protein homolog hpl-2; interaction may maintain localization of hpl-2 to gene bodies. Widely expressed in a range of tissues including body wall muscles, pharynx and neurons of the midbody in adults and larvae.

It localises to the nucleus. The protein localises to the cytoplasm. Functionally, RNA-binding protein which regulates transcription, splicing and RNA-editing. Limits the accumulation of double-stranded RNA by maintaining the abundance of the mature RNA transcripts that are formed from double-stranded precursor RNAs. Stress response protein that acts downstream of daf-16 in the insulin/IGF pathway to regulate longevity and the cellular stress response to osmotic, oxidative, proteotoxic and endoplasmic reticulum stress. Involved in the regulation of physiological processes including aging, fertility, growth and locomotion. Plays a role in maintaining localization of chromobox protein homolog hpl-2 to gene bodies, perhaps acting via binding to nascent RNA transcripts. The chain is Tar DNA-binding protein homolog 1 from Caenorhabditis elegans.